We begin with the raw amino-acid sequence, 321 residues long: Lipoyl synthase (321 aa).

C68, C73, C79, C94, C98, C101, and S308 together coordinate [4Fe-4S] cluster. The 218-residue stretch at F80–T297 folds into the Radical SAM core domain.

Belongs to the radical SAM superfamily. Lipoyl synthase family. [4Fe-4S] cluster serves as cofactor.

The protein resides in the cytoplasm. The catalysed reaction is [[Fe-S] cluster scaffold protein carrying a second [4Fe-4S](2+) cluster] + N(6)-octanoyl-L-lysyl-[protein] + 2 oxidized [2Fe-2S]-[ferredoxin] + 2 S-adenosyl-L-methionine + 4 H(+) = [[Fe-S] cluster scaffold protein] + N(6)-[(R)-dihydrolipoyl]-L-lysyl-[protein] + 4 Fe(3+) + 2 hydrogen sulfide + 2 5'-deoxyadenosine + 2 L-methionine + 2 reduced [2Fe-2S]-[ferredoxin]. It functions in the pathway protein modification; protein lipoylation via endogenous pathway; protein N(6)-(lipoyl)lysine from octanoyl-[acyl-carrier-protein]: step 2/2. Functionally, catalyzes the radical-mediated insertion of two sulfur atoms into the C-6 and C-8 positions of the octanoyl moiety bound to the lipoyl domains of lipoate-dependent enzymes, thereby converting the octanoylated domains into lipoylated derivatives. This Shewanella sp. (strain ANA-3) protein is Lipoyl synthase.